Here is a 687-residue protein sequence, read N- to C-terminus: Ferric vibriobactin receptor ViuA (687 aa).

Residues 1 to 37 (MAVLCPARVSVAENKKFKLHTLSAMMMGLFTGSFAYA) form the signal peptide. In terms of domain architecture, TBDR plug spans 62–184 (SIYETSASVE…SAGAIVMKSN (123 aa)). Positions 189 to 687 (HFESAVKAGI…MIGASVQLNF (499 aa)) constitute a TBDR beta-barrel domain.

It belongs to the TonB-dependent receptor family.

The protein resides in the cell outer membrane. In terms of biological role, involved in the uptake of iron in complex with vibriobactin, a catecholate siderophore synthesized by V.cholerae. Binds and transports ferric vibriobactin across the outer membrane. The energy source is provided by the inner membrane TonB system. The protein is Ferric vibriobactin receptor ViuA of Vibrio cholerae serotype O1 (strain ATCC 39541 / Classical Ogawa 395 / O395).